The primary structure comprises 242 residues: DNA repair protein RecO (242 aa).

This sequence belongs to the RecO family.

Functionally, involved in DNA repair and RecF pathway recombination. The chain is DNA repair protein RecO from Xanthobacter autotrophicus (strain ATCC BAA-1158 / Py2).